Here is a 433-residue protein sequence, read N- to C-terminus: E3 ubiquitin-protein ligase RGLG5 (433 aa).

The disordered stretch occupies residues 1 to 61 (MGGSSSKESP…SYNSGRQTPK (61 aa)). The N-myristoyl glycine moiety is linked to residue glycine 2. The span at 22–39 (SVSGSSSYSSAWDQSSYY) shows a compositional bias: low complexity. The span at 40–61 (QTPNHPSASPVSSYNSGRQTPK) shows a compositional bias: polar residues. The VWFA domain occupies 93-313 (NLIVGIDVTK…KEAEFALSAL (221 aa)). Residues 340–383 (IALPPPTYATQSMRNSPRTSRSTSFQNKPYDNGVSSTPPSTTHN) form a disordered region. The span at 347–383 (YATQSMRNSPRTSRSTSFQNKPYDNGVSSTPPSTTHN) shows a compositional bias: polar residues. An RING-type zinc finger spans residues 390–423 (CPVCLVSAKNMAFNCGHQTCAGCGEDLHVCPICR).

As to quaternary structure, interacts with PP2CA. N-myristoylated.

It is found in the cell membrane. The enzyme catalyses S-ubiquitinyl-[E2 ubiquitin-conjugating enzyme]-L-cysteine + [acceptor protein]-L-lysine = [E2 ubiquitin-conjugating enzyme]-L-cysteine + N(6)-ubiquitinyl-[acceptor protein]-L-lysine.. Functionally, together with RGLG1, mediates the ubiquitination and subsequent proteasomal degradation of the target protein PP2CA. Functions as a positive regulator of abscisic acid (ABA) signaling through ABA-dependent degradation of PP2CA, a major inhibitor of ABA signaling. This Arabidopsis thaliana (Mouse-ear cress) protein is E3 ubiquitin-protein ligase RGLG5.